The following is a 214-amino-acid chain: MIKSTLIFRDDGLPLCSSVDDDTDPSLADQKKKVKVLISRFTPQSANEATLESGAYEMHYVRQQSVVYIVIVERGYPRNLAFAYLADVRHEFEHSYGNEYVKPSVRPYAFVSFDNFLQKTKKIYNDKRVQGNLDQLNSDLLGVKQIMTKNIEDLLYRGDSLDRMSDLSASLRQDSKKYRRSAQKINFDLLLSQYAPVALIGLFFLFLVWWLVFR.

Over 1 to 192 (MIKSTLIFRD…QKINFDLLLS (192 aa)) the chain is Cytoplasmic. One can recognise a Longin domain in the interval 6–117 (LIFRDDGLPL…YAFVSFDNFL (112 aa)). Residues 132–192 (NLDQLNSDLL…QKINFDLLLS (61 aa)) form the v-SNARE coiled-coil homology domain. A helical; Anchor for type IV membrane protein membrane pass occupies residues 193 to 213 (QYAPVALIGLFFLFLVWWLVF). A topological domain (vesicular) is located at residue Arg214.

The protein belongs to the synaptobrevin family.

The protein resides in the membrane. It localises to the endoplasmic reticulum membrane. Its subcellular location is the golgi apparatus membrane. In terms of biological role, required for transport from the ER to the Golgi complex. The chain is Protein transport protein SEC22 (SEC22) from Eremothecium gossypii (strain ATCC 10895 / CBS 109.51 / FGSC 9923 / NRRL Y-1056) (Yeast).